The following is a 162-amino-acid chain: NADH-quinone oxidoreductase subunit I (162 aa).

4Fe-4S ferredoxin-type domains lie at 54-83 (RRYE…INST) and 93-122 (SSYE…ETNI). [4Fe-4S] cluster is bound by residues C63, C66, C69, C73, C102, C105, C108, and C112.

Belongs to the complex I 23 kDa subunit family. In terms of assembly, NDH-1 is composed of 14 different subunits. Subunits NuoA, H, J, K, L, M, N constitute the membrane sector of the complex. It depends on [4Fe-4S] cluster as a cofactor.

The protein resides in the cell inner membrane. It carries out the reaction a quinone + NADH + 5 H(+)(in) = a quinol + NAD(+) + 4 H(+)(out). In terms of biological role, NDH-1 shuttles electrons from NADH, via FMN and iron-sulfur (Fe-S) centers, to quinones in the respiratory chain. The immediate electron acceptor for the enzyme in this species is believed to be ubiquinone. Couples the redox reaction to proton translocation (for every two electrons transferred, four hydrogen ions are translocated across the cytoplasmic membrane), and thus conserves the redox energy in a proton gradient. The chain is NADH-quinone oxidoreductase subunit I from Francisella tularensis subsp. tularensis (strain FSC 198).